A 321-amino-acid polypeptide reads, in one-letter code: MNKEKTIIFSMPNTHVLAQEICDELKMKLHSVNKTIFADGEVLLSSKETVRSKDVFIVASTSHPANNNIMDLLIFVDSLKRASAKTINVILSYYGYARQDRKAEGRQPIAAKLLADLLQVAGISRIVVVDLHNPSIQGFFNIPVDDIKAQYILSKEFTIKDEKFTIVSPDHGGTIRARIMAEIISNDVKIAIIDKRRVSTNKTEVLGVIGDINNENAVIVDDIIDTGGTIVNAAEVLKKNGAKKISIVASHGIFSKGFDIFEDADVIDEVIVTNSIDNYELAKKYKKLKIVSLAPFLSKVIRSIMDSKSVSDIYAKYLESK.

Residues 39–41 and 98–99 each bind ATP; these read DGE and RQ. Mg(2+) is bound by residues histidine 132 and aspartate 170. Lysine 195 is an active-site residue. D-ribose 5-phosphate is bound by residues arginine 197, aspartate 221, and 225–229; that span reads DTGGT.

It belongs to the ribose-phosphate pyrophosphokinase family. Class I subfamily. Homohexamer. The cofactor is Mg(2+).

The protein localises to the cytoplasm. It carries out the reaction D-ribose 5-phosphate + ATP = 5-phospho-alpha-D-ribose 1-diphosphate + AMP + H(+). It functions in the pathway metabolic intermediate biosynthesis; 5-phospho-alpha-D-ribose 1-diphosphate biosynthesis; 5-phospho-alpha-D-ribose 1-diphosphate from D-ribose 5-phosphate (route I): step 1/1. In terms of biological role, involved in the biosynthesis of the central metabolite phospho-alpha-D-ribosyl-1-pyrophosphate (PRPP) via the transfer of pyrophosphoryl group from ATP to 1-hydroxyl of ribose-5-phosphate (Rib-5-P). The polypeptide is Ribose-phosphate pyrophosphokinase (Mycoplasmopsis pulmonis (strain UAB CTIP) (Mycoplasma pulmonis)).